A 179-amino-acid chain; its full sequence is Repressor of phase 1 flagellin gene (179 aa).

In terms of biological role, transcriptional repressor of the FliC phase-1 flagellin. In Salmonella abony, this protein is Repressor of phase 1 flagellin gene (fljA).